The chain runs to 383 residues: UDP-N-acetylglucosamine--N-acetylmuramyl-(pentapeptide) pyrophosphoryl-undecaprenol N-acetylglucosamine transferase (383 aa).

UDP-N-acetyl-alpha-D-glucosamine contacts are provided by residues 10–12 (TGG), N124, R165, S190, I245, and Q290. Residues 364 to 383 (PFGQAREPGQKPARPPDLAS) form a disordered region.

This sequence belongs to the glycosyltransferase 28 family. MurG subfamily.

The protein resides in the cell inner membrane. The enzyme catalyses di-trans,octa-cis-undecaprenyl diphospho-N-acetyl-alpha-D-muramoyl-L-alanyl-D-glutamyl-meso-2,6-diaminopimeloyl-D-alanyl-D-alanine + UDP-N-acetyl-alpha-D-glucosamine = di-trans,octa-cis-undecaprenyl diphospho-[N-acetyl-alpha-D-glucosaminyl-(1-&gt;4)]-N-acetyl-alpha-D-muramoyl-L-alanyl-D-glutamyl-meso-2,6-diaminopimeloyl-D-alanyl-D-alanine + UDP + H(+). Its pathway is cell wall biogenesis; peptidoglycan biosynthesis. Cell wall formation. Catalyzes the transfer of a GlcNAc subunit on undecaprenyl-pyrophosphoryl-MurNAc-pentapeptide (lipid intermediate I) to form undecaprenyl-pyrophosphoryl-MurNAc-(pentapeptide)GlcNAc (lipid intermediate II). This chain is UDP-N-acetylglucosamine--N-acetylmuramyl-(pentapeptide) pyrophosphoryl-undecaprenol N-acetylglucosamine transferase, found in Anaeromyxobacter dehalogenans (strain 2CP-C).